The sequence spans 360 residues: Putative beta-glucosidase 15 (360 aa).

Basic and acidic residues-rich tracts occupy residues 1–11 (MARRRMGEEGK) and 47–67 (GRRE…ERKG). 2 disordered regions span residues 1–21 (MARR…NGRQ) and 35–103 (GWRS…RAER). Basic residues predominate over residues 75-86 (GKRRRERRRGGR). Y183 contributes to the a beta-D-glucoside binding site. A disulfide bridge links C191 with C196. A beta-D-glucoside contacts are provided by residues E254, W301, 308–309 (EW), and F317. Catalysis depends on E254, which acts as the Nucleophile. N346 carries an N-linked (GlcNAc...) asparagine glycan.

The protein belongs to the glycosyl hydrolase 1 family.

It catalyses the reaction Hydrolysis of terminal, non-reducing beta-D-glucosyl residues with release of beta-D-glucose.. In Oryza sativa subsp. japonica (Rice), this protein is Putative beta-glucosidase 15 (BGLU15).